Reading from the N-terminus, the 321-residue chain is CRISPR-associated aCascade subunit Cas7/Csa2 2 (321 aa).

The protein belongs to the CRISPR-associated protein Cas7/Cst2/DevR family. Subtype I-a/Apern subfamily. In terms of assembly, part of the aCascade ribonucleoprotein complex, minimally composed of Csa2 and Cas5a, which binds crRNA. Other possible components of aCascade in strain P1 are Cas6b (SSO1437) and Csa5 (SSO1443), while SSO1399, Cas5b (SSO1400) and SSO1401 have sometimes been seen weakly associated. Csa2 is probably the major RNA-binding subunit. The Csa2-Cas5a-crRNA complex also binds target DNA homologous to crRNA, probably forming an R-loop. Purified aCascade forms a filament about 6 nm in width.

Its function is as follows. CRISPR (clustered regularly interspaced short palindromic repeat) is an adaptive immune system that provides protection against mobile genetic elements (viruses, transposable elements and conjugative plasmids). CRISPR clusters contain spacers, sequences complementary to antecedent mobile elements, and target invading nucleic acids. CRISPR clusters are transcribed and processed into CRISPR RNA (crRNA). This is CRISPR-associated aCascade subunit Cas7/Csa2 2 (csa2b) from Saccharolobus solfataricus (strain ATCC 35092 / DSM 1617 / JCM 11322 / P2) (Sulfolobus solfataricus).